A 466-amino-acid chain; its full sequence is Soluble pyridine nucleotide transhydrogenase (466 aa).

Position 36-45 (36-45 (ERYQNVGGGC)) interacts with FAD.

This sequence belongs to the class-I pyridine nucleotide-disulfide oxidoreductase family. Requires FAD as cofactor.

The protein localises to the cytoplasm. It catalyses the reaction NAD(+) + NADPH = NADH + NADP(+). Its function is as follows. Conversion of NADPH, generated by peripheral catabolic pathways, to NADH, which can enter the respiratory chain for energy generation. The polypeptide is Soluble pyridine nucleotide transhydrogenase (Escherichia coli O9:H4 (strain HS)).